We begin with the raw amino-acid sequence, 341 residues long: Ketol-acid reductoisomerase (NADP(+)) (341 aa).

In terms of domain architecture, KARI N-terminal Rossmann spans 2 to 182; the sequence is TDIVYDKDAD…GGLRAGGIRT (181 aa). NADP(+)-binding positions include 25–28, K48, S51, S53, and 83–86; these read YGSQ and DQHQ. Residue H108 is part of the active site. An NADP(+)-binding site is contributed by G134. Residues 183–328 enclose the KARI C-terminal knotted domain; the sequence is TFTEETETDL…RELRKLFAWN (146 aa). Positions 191, 195, 227, and 231 each coordinate Mg(2+). S252 is a binding site for substrate.

It belongs to the ketol-acid reductoisomerase family. Mg(2+) is required as a cofactor.

It carries out the reaction (2R)-2,3-dihydroxy-3-methylbutanoate + NADP(+) = (2S)-2-acetolactate + NADPH + H(+). It catalyses the reaction (2R,3R)-2,3-dihydroxy-3-methylpentanoate + NADP(+) = (S)-2-ethyl-2-hydroxy-3-oxobutanoate + NADPH + H(+). It participates in amino-acid biosynthesis; L-isoleucine biosynthesis; L-isoleucine from 2-oxobutanoate: step 2/4. Its pathway is amino-acid biosynthesis; L-valine biosynthesis; L-valine from pyruvate: step 2/4. Functionally, involved in the biosynthesis of branched-chain amino acids (BCAA). Catalyzes an alkyl-migration followed by a ketol-acid reduction of (S)-2-acetolactate (S2AL) to yield (R)-2,3-dihydroxy-isovalerate. In the isomerase reaction, S2AL is rearranged via a Mg-dependent methyl migration to produce 3-hydroxy-3-methyl-2-ketobutyrate (HMKB). In the reductase reaction, this 2-ketoacid undergoes a metal-dependent reduction by NADPH to yield (R)-2,3-dihydroxy-isovalerate. The protein is Ketol-acid reductoisomerase (NADP(+)) of Clavibacter sepedonicus (Clavibacter michiganensis subsp. sepedonicus).